The following is a 424-amino-acid chain: GTPase Obg (424 aa).

Positions 1–158 (MFVDRAEVFV…RYISLELKIL (158 aa)) constitute an Obg domain. The segment at 21 to 42 (SFRREKYVPRGGPDGGDGGKGG) is disordered. Residues 32–42 (GPDGGDGGKGG) show a composition bias toward gly residues. Residues 159-331 (ADVGLLGFPN…LMKEAAAMLT (173 aa)) enclose the OBG-type G domain. GTP-binding positions include 165–172 (GFPNVGKS), 190–194 (FTTLS), 212–215 (DIPG), 282–285 (NKAD), and 312–314 (SAA). Residues Ser-172 and Thr-192 each contribute to the Mg(2+) site. The OCT domain occupies 345–424 (KFIPEEKRFT…LNDFEFDYIL (80 aa)).

Belongs to the TRAFAC class OBG-HflX-like GTPase superfamily. OBG GTPase family. Monomer. Mg(2+) serves as cofactor.

It localises to the cytoplasm. In terms of biological role, an essential GTPase which binds GTP, GDP and possibly (p)ppGpp with moderate affinity, with high nucleotide exchange rates and a fairly low GTP hydrolysis rate. Plays a role in control of the cell cycle, stress response, ribosome biogenesis and in those bacteria that undergo differentiation, in morphogenesis control. The sequence is that of GTPase Obg from Clostridium kluyveri (strain NBRC 12016).